A 426-amino-acid chain; its full sequence is MKLQKPKGTQDILPGESAKWQYVENVIRNLFKQYHYDEIRTPMFEHYEVISRSVGDTTDIVTKEMYDFHDKGDRHITLRPEGTAPVVRSYVENKLFAPEVQKPTKMYYIGSMFRYERPQAGRLREFHQVGVECFGSNNPATDVETIAMGHHLFEDLGIKNVKLHLNSLGNPESRQAYRQALIDYLTPIREQLSKDSQRRLNENPLRVLDSKEPEDKLAVENAPSILDYLDESSQAHFDAVCHMLDALNIPYIIDTNMVRGLDYYNHTIFEFITEIEDNELTICAGGRYDGLVSYFGGPETPAFGFGLGLERLLLILDKQGISLPIENTIDLYIAVLGSEANLAALDLAQSIRHQGFKVERDYLGRKIKAQFKSADTFNAKVIMTLGSSEVDSKEVGLKNNQTRQEVKVSFENIKTDFSSVLKQLGL.

This sequence belongs to the class-II aminoacyl-tRNA synthetase family. As to quaternary structure, homodimer.

It localises to the cytoplasm. The enzyme catalyses tRNA(His) + L-histidine + ATP = L-histidyl-tRNA(His) + AMP + diphosphate + H(+). This Streptococcus agalactiae serotype III (strain NEM316) protein is Histidine--tRNA ligase.